A 485-amino-acid polypeptide reads, in one-letter code: Adenylate kinase 8 (485 aa).

2 adenylate kinase regions span residues 58–258 (PRVF…TFVL) and 269–471 (PRIL…SYIV). Position 67-72 (67-72 (ASGKHT)) interacts with ATP. Residues 87–113 (TPENVLSSDVSLLVKEAQSYRDKGQEV) are NMP 1. Residues 140-143 (GFPK) and Gln-147 contribute to the AMP site. The LID 1 stretch occupies residues 177 to 206 (GKRIDITDGEVYHTTFDWPSDPAVQRNLVE). Position 218 (Arg-218) interacts with AMP. 278-283 (GSGRSL) contributes to the ATP binding site. The interval 298–327 (CCGQVLKEAVADQTKLGELIQPYIENDQQV) is NMP 2. AMP-binding positions include 325–327 (QQV), 354–357 (GFPQ), and Gln-361. The segment at 391 to 424 (LCMTDPVSGERYHSIYKPAPRSEVQERLQQNPKY) is LID 2. Arg-432 provides a ligand contact to AMP.

It belongs to the adenylate kinase family.

Its subcellular location is the cytoplasm. The protein resides in the cytosol. It catalyses the reaction AMP + ATP = 2 ADP. The enzyme catalyses a 2'-deoxyribonucleoside 5'-diphosphate + ATP = a 2'-deoxyribonucleoside 5'-triphosphate + ADP. It carries out the reaction a ribonucleoside 5'-diphosphate + ATP = a ribonucleoside 5'-triphosphate + ADP. Nucleoside monophosphate (NMP) kinase that catalyzes the reversible transfer of the terminal phosphate group between nucleoside triphosphates and monophosphates. Has highest activity toward AMP, and weaker activity toward dAMP, CMP and dCMP. Also displays broad nucleoside diphosphate kinase activity. The chain is Adenylate kinase 8 (ak8) from Xenopus laevis (African clawed frog).